A 333-amino-acid polypeptide reads, in one-letter code: Cell shape-determining protein Mbl (333 aa).

ATP contacts are provided by residues 12–14, 156–158, 204–207, and 284–287; these read TAN, GGT, EDIK, and GGAL.

Belongs to the FtsA/MreB family. In terms of assembly, forms polymers.

Its subcellular location is the cytoplasm. Functionally, forms membrane-associated dynamic filaments that are essential for cell shape determination. Acts by regulating cell wall synthesis and cell elongation, and thus cell shape. A feedback loop between cell geometry and Mbl localization may maintain elongated cell shape by targeting cell wall growth to regions of negative cell wall curvature. The polypeptide is Cell shape-determining protein Mbl (Bacillus cereus (strain ATCC 10987 / NRS 248)).